The primary structure comprises 248 residues: UPF0328 protein ECU06_0030/ECU06_1690/ECU11_0020 (248 aa).

Disordered stretches follow at residues 1–34 (MVRH…HPSR) and 51–81 (ASAE…ILPD). 2 stretches are compositionally biased toward polar residues: residues 10-19 (PKTTNPNPES) and 61-76 (QNLS…THQS).

It belongs to the UPF0328 family.

The sequence is that of UPF0328 protein ECU06_0030/ECU06_1690/ECU11_0020 from Encephalitozoon cuniculi (strain GB-M1) (Microsporidian parasite).